A 406-amino-acid chain; its full sequence is GTPase Obg (406 aa).

An Obg domain is found at 1–159 (MRFVDEAVIT…REIRLELKVL (159 aa)). Positions 120–143 (GGEGGLGNTHFKSSTNRAPRKCTT) are disordered. The OBG-type G domain occupies 160 to 333 (ADVGLLGMPN…VVYYLMDQIE (174 aa)). GTP is bound by residues 166–173 (GMPNAGKS), 191–195 (FTTMV), 213–216 (DIPG), 283–286 (NKLD), and 314–316 (SGL). Residues Ser173 and Thr193 each contribute to the Mg(2+) site. A disordered region spans residues 381–406 (ESMMDDDDDFDDDEDDGDVESIYVRD). The segment covering 383 to 399 (MMDDDDDFDDDEDDGDV) has biased composition (acidic residues).

This sequence belongs to the TRAFAC class OBG-HflX-like GTPase superfamily. OBG GTPase family. As to quaternary structure, monomer. Mg(2+) is required as a cofactor.

Its subcellular location is the cytoplasm. Functionally, an essential GTPase which binds GTP, GDP and possibly (p)ppGpp with moderate affinity, with high nucleotide exchange rates and a fairly low GTP hydrolysis rate. Plays a role in control of the cell cycle, stress response, ribosome biogenesis and in those bacteria that undergo differentiation, in morphogenesis control. In Acinetobacter baumannii (strain SDF), this protein is GTPase Obg.